Reading from the N-terminus, the 366-residue chain is Melatonin receptor type 1A (366 aa).

Topologically, residues 1–45 (MAGRLWGSPGGTPKGNGSSALLNVSQAAPGAGDGVRPRPSWLAAT) are extracellular. N-linked (GlcNAc...) asparagine glycosylation is found at asparagine 16 and asparagine 23. The helical transmembrane segment at 46 to 66 (LASILIFTIVVDIVGNLLVVL) threads the bilayer. Residues 67-79 (SVYRNKKLRNAGN) are Cytoplasmic-facing. The chain crosses the membrane as a helical span at residues 80-100 (VFVVSLAVADLLVAVYPYPLA). Residues 101 to 118 (LASIVNNGWSLSSLHCQL) lie on the Extracellular side of the membrane. Cysteine 116 and cysteine 193 are disulfide-bonded. The chain crosses the membrane as a helical span at residues 119-139 (SGFLMGLSVIGSVFSITGIAI). At 140-158 (NRYCCICHSLRYGKLYSGT) the chain is on the cytoplasmic side. A helical membrane pass occupies residues 159-179 (NSLCYVFLIWTLTLVAIVPNL). The Extracellular portion of the chain corresponds to 180–203 (CVGTLQYDPRIYSCTFTQSVSSAY). A helical transmembrane segment spans residues 204 to 224 (TIAVVVFHFIVPMLVVVFCYL). Topologically, residues 225–256 (RIWALVLQVRWKVKPDNKPKLKPQDFRNFVTM) are cytoplasmic. Residues 257–277 (FVVFVLFAICWAPLNFIGLVV) form a helical membrane-spanning segment. At 278–290 (ASDPASMAPRIPE) the chain is on the extracellular side. The helical transmembrane segment at 291–311 (WLFVASYYMAYFNSCLNAIIY) threads the bilayer. Over 312–366 (GLLNQNFRQEYRKIIVSLCTTKMFFVDSSNHVADRIKRKPSPLIANHNLIKVDSV) the chain is Cytoplasmic.

This sequence belongs to the G-protein coupled receptor 1 family.

The protein resides in the cell membrane. High affinity receptor for melatonin. Likely to mediate the reproductive and circadian actions of melatonin. The activity of this receptor is mediated by pertussis toxin sensitive G proteins that inhibit adenylate cyclase activity. Possibly involved in sleep induction, by melatonin activation of the potassium channel KCNMA1/BK and the dissociation of G-beta and G-gamma subunits, thereby decreasing synaptic transmission. This chain is Melatonin receptor type 1A (MTNR1A), found in Ovis aries (Sheep).